Here is a 453-residue protein sequence, read N- to C-terminus: Gamma-glutamylpolyamine synthetase GlnA2 (453 aa).

Residues 15 to 100 (RDIRFVRLWF…MFCDILMPDG (86 aa)) enclose the GS beta-grasp domain. Positions 107–453 (PRYVLKRALA…FELRKSLPVL (347 aa)) constitute a GS catalytic domain. Residues glutamate 130 and glutamate 132 each coordinate Mg(2+). An ATP-binding site is contributed by glutamate 182. Residues glutamate 187 and glutamate 194 each contribute to the Mg(2+) site. Glycine 239 provides a ligand contact to L-glutamate. Position 243 (histidine 243) interacts with Mg(2+). 245 to 247 (HLS) is a binding site for ATP. 3 residues coordinate L-glutamate: arginine 296, glutamate 310, and arginine 322. ATP contacts are provided by arginine 322 and arginine 327. Glutamate 342 is a Mg(2+) binding site. Arginine 344 serves as a coordination point for L-glutamate.

The protein belongs to the glutamine synthetase family. The cofactor is Mg(2+).

It carries out the reaction putrescine + L-glutamate + ATP = gamma-L-glutamylputrescine + ADP + phosphate + H(+). The catalysed reaction is spermine + L-glutamate + ATP = gamma-L-glutamylspermine + ADP + phosphate + H(+). The enzyme catalyses spermidine + L-glutamate + ATP = gamma-L-glutamylspermidine + ADP + phosphate + H(+). It catalyses the reaction cadaverine + L-glutamate + ATP = gamma-L-glutamylcadaverine + ADP + phosphate + H(+). It participates in amine and polyamine degradation; putrescine degradation. The protein operates within amine and polyamine degradation; spermidine degradation. It functions in the pathway amine and polyamine degradation; spermine degradation. Its activity is regulated as follows. No effect on activity with glutamine synthetase (GS) inhibitor methionine sulfoximine (MSO). In terms of biological role, involved in the catabolism of polyamines. Catalyzes the ATP-dependent gamma-glutamylation of polyamines. Substrates include putrescine, cadaverine, spermidine and spermine, with a preference for short-chain polyamine putrescine. No complementation of the L-glutamine auxotrophy of an E.coli glnA mutant. Together with GlnA3, enables survival of S.coelicolor under exposure to high local environmental polyamine concentrations, which is toxic to the cells. The polypeptide is Gamma-glutamylpolyamine synthetase GlnA2 (Streptomyces coelicolor (strain ATCC BAA-471 / A3(2) / M145)).